The following is a 267-amino-acid chain: Undecaprenyl-diphosphatase (267 aa).

Helical transmembrane passes span 39 to 59 (QGLA…ILYF), 87 to 107 (WMIA…KDFI), 111 to 131 (LRSA…LWWV), 149 to 169 (ALFI…RSGA), 189 to 209 (FLMS…KLVT), 218 to 238 (ALSI…HAFL), and 244 to 264 (VGMM…IAFL).

It belongs to the UppP family.

The protein localises to the cell inner membrane. The enzyme catalyses di-trans,octa-cis-undecaprenyl diphosphate + H2O = di-trans,octa-cis-undecaprenyl phosphate + phosphate + H(+). Functionally, catalyzes the dephosphorylation of undecaprenyl diphosphate (UPP). Confers resistance to bacitracin. This is Undecaprenyl-diphosphatase from Photobacterium profundum (strain SS9).